A 391-amino-acid polypeptide reads, in one-letter code: MVASSFQHHLEPMLTQPIPCQICTYQSHGVNFNVMTCRACAAFFRRSLVCGMRYHCKTRKNDCRIDSTERHFCRLCRFQKCLQMGMKAEKIQQNRDPISSTFPGTSTEPELSEIVDPENEKSYIFHGTLYGFKSLLAEVRYIFSISRNYSDSPLTDLENGFKLITRHQKRRYIDIEDRINFQNLTDFRLGHIKNCATWLTHSSFFQSLTETENLLILKSTWHVWSWLELLSVSVEIFGNQVCEEKIVFLSEKIAVDIVKVFRYILKPLNKQEKRKVEKELNPIFHILFDDVARKLQNLKPSSLEINYMLWQLVWFVAEKVLNEDNLRHGEQYTNQLASDLHNHYKNDLHLEQYAQRVLKMMAIVKSLQKHLMNIHKIIDYADNFCNLFAMK.

The segment at residues proline 17–glutamine 93 is a DNA-binding region (nuclear receptor). 2 consecutive NR C4-type zinc fingers follow at residues cysteine 20–cysteine 40 and cysteine 56–cysteine 76. One can recognise an NR LBD domain in the interval serine 146 to lysine 391.

Belongs to the nuclear hormone receptor family.

It localises to the nucleus. Orphan nuclear receptor. This is Nuclear hormone receptor family member nhr-218 (nhr-218) from Caenorhabditis elegans.